The primary structure comprises 309 residues: (S)-sulfolactate dehydrogenase (309 aa).

NAD(+) contacts are provided by residues 151–152, aspartate 171, 231–233, and aspartate 257; these read GI and TAR. The active site involves arginine 233. Glutamate 262 is an active-site residue. Histidine 281 acts as the Proton donor in catalysis. 281 to 284 contacts NAD(+); it reads HIAG.

Belongs to the D-isomer specific 2-hydroxyacid dehydrogenase family.

The catalysed reaction is (2S)-3-sulfolactate + NAD(+) = 3-sulfopyruvate + NADH + H(+). Functionally, dehydrogenase of the (R,S)-sulfolactate degradation pathway that only acts on the (S)-enantiomer of 3-sulfolactate. Together with ComC, provides a racemase system that converts (2S)-3-sulfolactate to (2R)-3-sulfolactate, which is degraded further by (2R)-sulfolactate sulfo-lyase. Specific for NAD. Also able to form sulfolactate from sulfopyruvate. This Chromohalobacter salexigens (strain ATCC BAA-138 / DSM 3043 / CIP 106854 / NCIMB 13768 / 1H11) protein is (S)-sulfolactate dehydrogenase (slcC).